The sequence spans 183 residues: Inner membrane-spanning protein YciB (183 aa).

Helical transmembrane passes span 10-30 (LVIF…GALI), 50-70 (MHLI…VFHD), 72-92 (AFIK…LAVS), 118-138 (VTWY…YVAF), and 148-168 (FKVF…VIYL).

It belongs to the YciB family.

Its subcellular location is the cell inner membrane. Functionally, plays a role in cell envelope biogenesis, maintenance of cell envelope integrity and membrane homeostasis. The sequence is that of Inner membrane-spanning protein YciB from Shewanella sediminis (strain HAW-EB3).